Reading from the N-terminus, the 222-residue chain is Pleckstrin homology domain-containing family B member 2 (222 aa).

A PH domain is found at 2–109 (AFVKSGWLLR…WKFTLQDSRT (108 aa)). An a 1,2-diacyl-sn-glycero-3-phospho-L-serine-binding site is contributed by lysine 20.

The protein localises to the recycling endosome membrane. Functionally, involved in retrograde transport of recycling endosomes. In Pongo abelii (Sumatran orangutan), this protein is Pleckstrin homology domain-containing family B member 2 (PLEKHB2).